Here is a 239-residue protein sequence, read N- to C-terminus: Probable transcriptional regulatory protein BCG9842_B4761 (239 aa).

Belongs to the TACO1 family. YeeN subfamily.

It localises to the cytoplasm. The polypeptide is Probable transcriptional regulatory protein BCG9842_B4761 (Bacillus cereus (strain G9842)).